The chain runs to 87 residues: MSEEAKVQRAVIGRVVSDKMDKTRTILIERKVRHPLYGKYIRRSTKLHVHDEGNEARMGDKVMVQECRPMSKTKTFRLVKVLEKAAG.

Belongs to the universal ribosomal protein uS17 family. Part of the 30S ribosomal subunit.

Functionally, one of the primary rRNA binding proteins, it binds specifically to the 5'-end of 16S ribosomal RNA. The chain is Small ribosomal subunit protein uS17 from Thioalkalivibrio sulfidiphilus (strain HL-EbGR7).